A 183-amino-acid polypeptide reads, in one-letter code: Cell division protein ZapC (183 aa).

It belongs to the ZapC family. As to quaternary structure, interacts directly with FtsZ.

The protein resides in the cytoplasm. Its function is as follows. Contributes to the efficiency of the cell division process by stabilizing the polymeric form of the cell division protein FtsZ. Acts by promoting interactions between FtsZ protofilaments and suppressing the GTPase activity of FtsZ. The protein is Cell division protein ZapC of Proteus mirabilis (strain HI4320).